A 356-amino-acid polypeptide reads, in one-letter code: tRNA N6-adenosine threonylcarbamoyltransferase (356 aa).

Residues His-115 and His-119 each coordinate Fe cation. Residues 138-142, Asp-171, Gly-184, and Asn-283 each bind substrate; that span reads LVSGG. A Fe cation-binding site is contributed by Asp-311.

The protein belongs to the KAE1 / TsaD family. Fe(2+) serves as cofactor.

Its subcellular location is the cytoplasm. It catalyses the reaction L-threonylcarbamoyladenylate + adenosine(37) in tRNA = N(6)-L-threonylcarbamoyladenosine(37) in tRNA + AMP + H(+). Required for the formation of a threonylcarbamoyl group on adenosine at position 37 (t(6)A37) in tRNAs that read codons beginning with adenine. Is involved in the transfer of the threonylcarbamoyl moiety of threonylcarbamoyl-AMP (TC-AMP) to the N6 group of A37, together with TsaE and TsaB. TsaD likely plays a direct catalytic role in this reaction. This chain is tRNA N6-adenosine threonylcarbamoyltransferase, found in Prochlorococcus marinus subsp. pastoris (strain CCMP1986 / NIES-2087 / MED4).